The sequence spans 332 residues: Casein kinase II subunit alpha (332 aa).

One can recognise a Protein kinase domain in the interval 43–327 (YEIIRKVGRG…TCQEAMAHPY (285 aa)). ATP contacts are provided by residues 49-57 (VGRGKYSEV) and K72. D160 functions as the Proton acceptor in the catalytic mechanism.

It belongs to the protein kinase superfamily. Ser/Thr protein kinase family. CK2 subfamily. Tetramer composed of two alpha chains, one beta chain and one beta' chain.

The enzyme catalyses L-seryl-[protein] + ATP = O-phospho-L-seryl-[protein] + ADP + H(+). It carries out the reaction L-threonyl-[protein] + ATP = O-phospho-L-threonyl-[protein] + ADP + H(+). Its function is as follows. Catalytic subunit of a constitutively active serine/threonine-protein kinase complex that phosphorylates a large number of substrates containing acidic residues C-terminal to the phosphorylated serine or threonine. In Schizosaccharomyces pombe (strain 972 / ATCC 24843) (Fission yeast), this protein is Casein kinase II subunit alpha.